A 272-amino-acid chain; its full sequence is D-aminoacyl-tRNA deacylase (272 aa).

This sequence belongs to the DtdA deacylase family. Monomer. Zn(2+) serves as cofactor.

It catalyses the reaction a D-aminoacyl-tRNA + H2O = a tRNA + a D-alpha-amino acid + H(+). The enzyme catalyses glycyl-tRNA(Ala) + H2O = tRNA(Ala) + glycine + H(+). Functionally, D-aminoacyl-tRNA deacylase with broad substrate specificity. By recycling D-aminoacyl-tRNA to D-amino acids and free tRNA molecules, this enzyme counteracts the toxicity associated with the formation of D-aminoacyl-tRNA entities in vivo. The polypeptide is D-aminoacyl-tRNA deacylase (Hyperthermus butylicus (strain DSM 5456 / JCM 9403 / PLM1-5)).